The sequence spans 335 residues: Lipase chaperone (335 aa).

A helical transmembrane segment spans residues 7–23 (LLPLAIALGLGFFIARP).

Belongs to the lipase chaperone family.

It is found in the cell inner membrane. May be involved in the folding of the extracellular lipase during its passage through the periplasm. The chain is Lipase chaperone (lifO) from Ectopseudomonas mendocina (Pseudomonas mendocina).